Consider the following 141-residue polypeptide: VLSPADKTNIKSTWDKIGGHAGDYGGEALDRTFQSFPTTKTYFPHFDLSPGSAQVKAHGKKVADALTTAVAHLDDLPGALSALSDLHAYKLRVDPVNFKLLSHCLLVTLACHHPTEFTPAVHASLDKFFTAVSTVLTSKYR.

Residues 1–141 (VLSPADKTNI…VSTVLTSKYR (141 aa)) enclose the Globin domain. Ser-3 carries the post-translational modification Phosphoserine. N6-succinyllysine is present on Lys-7. Thr-8 bears the Phosphothreonine mark. At Lys-11 the chain carries N6-succinyllysine. Lys-16 bears the N6-acetyllysine; alternate mark. Lys-16 is modified (N6-succinyllysine; alternate). Tyr-24 is subject to Phosphotyrosine. Ser-35 carries the phosphoserine modification. Residue Lys-40 is modified to N6-succinyllysine. Ser-49 is modified (phosphoserine). Position 58 (His-58) interacts with O2. Residue His-87 participates in heme b binding. At Ser-102 the chain carries Phosphoserine. Thr-108 is modified (phosphothreonine). Ser-124 is modified (phosphoserine). Thr-134 and Thr-137 each carry phosphothreonine. Ser-138 carries the post-translational modification Phosphoserine.

This sequence belongs to the globin family. In terms of assembly, heterotetramer of two alpha chains and two beta chains. As to expression, red blood cells.

Functionally, involved in oxygen transport from the lung to the various peripheral tissues. Hemopressin acts as an antagonist peptide of the cannabinoid receptor CNR1. Hemopressin-binding efficiently blocks cannabinoid receptor CNR1 and subsequent signaling. In Chrysocyon brachyurus (Maned wolf), this protein is Hemoglobin subunit alpha (HBA).